The following is a 112-amino-acid chain: T cell receptor alpha variable 41 (112 aa).

Positions 1–21 are cleaved as a signal peptide; sequence MVKIRQFLLAILWLQLSCVSA. Residues 24–112 form the Ig-like domain; it reads NEVEQSPQNL…DSAVYICAVR (89 aa). 2 N-linked (GlcNAc...) asparagine glycosylation sites follow: Asn-32 and Asn-44. Cys-45 and Cys-109 are disulfide-bonded.

Alpha-beta TR is a heterodimer composed of an alpha and beta chain; disulfide-linked. The alpha-beta TR is associated with the transmembrane signaling CD3 coreceptor proteins to form the TR-CD3 (TcR or TCR). The assembly of alpha-beta TR heterodimers with CD3 occurs in the endoplasmic reticulum where a single alpha-beta TR heterodimer associates with one CD3D-CD3E heterodimer, one CD3G-CD3E heterodimer and one CD247 homodimer forming a stable octameric structure. CD3D-CD3E and CD3G-CD3E heterodimers preferentially associate with TR alpha and TR beta chains, respectively. The association of the CD247 homodimer is the last step of TcR assembly in the endoplasmic reticulum and is required for transport to the cell surface.

It is found in the cell membrane. V region of the variable domain of T cell receptor (TR) alpha chain that participates in the antigen recognition. Alpha-beta T cell receptors are antigen specific receptors which are essential to the immune response and are present on the cell surface of T lymphocytes. Recognize peptide-major histocompatibility (MH) (pMH) complexes that are displayed by antigen presenting cells (APC), a prerequisite for efficient T cell adaptive immunity against pathogens. Binding of alpha-beta TR to pMH complex initiates TR-CD3 clustering on the cell surface and intracellular activation of LCK that phosphorylates the ITAM motifs of CD3G, CD3D, CD3E and CD247 enabling the recruitment of ZAP70. In turn ZAP70 phosphorylates LAT, which recruits numerous signaling molecules to form the LAT signalosome. The LAT signalosome propagates signal branching to three major signaling pathways, the calcium, the mitogen-activated protein kinase (MAPK) kinase and the nuclear factor NF-kappa-B (NF-kB) pathways, leading to the mobilization of transcription factors that are critical for gene expression and essential for T cell growth and differentiation. The T cell repertoire is generated in the thymus, by V-(D)-J rearrangement. This repertoire is then shaped by intrathymic selection events to generate a peripheral T cell pool of self-MH restricted, non-autoaggressive T cells. Post-thymic interaction of alpha-beta TR with the pMH complexes shapes TR structural and functional avidity. This is T cell receptor alpha variable 41 from Homo sapiens (Human).